Consider the following 446-residue polypeptide: Saccharopine dehydrogenase [NADP(+), L-glutamate-forming] (446 aa).

NADP(+) is bound by residues S10–V13, C33–T35, D54–V55, I75, S97–S98, L124–P126, and S174. L-saccharopine contacts are provided by residues S98–Y99 and D125. L-saccharopine-binding positions include R223 and T244–R246.

It belongs to the saccharopine dehydrogenase family. In terms of assembly, interacts with TRM112.

It carries out the reaction L-saccharopine + NADP(+) + H2O = (S)-2-amino-6-oxohexanoate + L-glutamate + NADPH + H(+). It participates in amino-acid biosynthesis; L-lysine biosynthesis via AAA pathway; L-lysine from L-alpha-aminoadipate (fungal route): step 2/3. The polypeptide is Saccharopine dehydrogenase [NADP(+), L-glutamate-forming] (LYS9) (Saccharomyces cerevisiae (strain ATCC 204508 / S288c) (Baker's yeast)).